Consider the following 714-residue polypeptide: Fatty acid oxidation complex subunit alpha (714 aa).

An enoyl-CoA hydratase region spans residues 1–190 (MEMTSAFTLN…KLGLVDDVVP (190 aa)). A 3-hydroxyacyl-CoA dehydrogenase region spans residues 306 to 714 (APLNSVGILG…FWKTTATDLQ (409 aa)).

The protein in the N-terminal section; belongs to the enoyl-CoA hydratase/isomerase family. It in the central section; belongs to the 3-hydroxyacyl-CoA dehydrogenase family. Heterotetramer of two alpha chains (FadJ) and two beta chains (FadI).

The protein localises to the cytoplasm. It carries out the reaction a (3S)-3-hydroxyacyl-CoA = a (2E)-enoyl-CoA + H2O. It catalyses the reaction a 4-saturated-(3S)-3-hydroxyacyl-CoA = a (3E)-enoyl-CoA + H2O. The enzyme catalyses a (3S)-3-hydroxyacyl-CoA + NAD(+) = a 3-oxoacyl-CoA + NADH + H(+). The catalysed reaction is (3S)-3-hydroxybutanoyl-CoA = (3R)-3-hydroxybutanoyl-CoA. The protein operates within lipid metabolism; fatty acid beta-oxidation. In terms of biological role, catalyzes the formation of a hydroxyacyl-CoA by addition of water on enoyl-CoA. Also exhibits 3-hydroxyacyl-CoA epimerase and 3-hydroxyacyl-CoA dehydrogenase activities. The polypeptide is Fatty acid oxidation complex subunit alpha (Escherichia coli (strain 55989 / EAEC)).